Reading from the N-terminus, the 360-residue chain is Photosystem II protein D1 (360 aa).

A run of 3 helical transmembrane segments spans residues 29 to 46 (YIGWFGVIMIPTLLTATT), 118 to 133 (HFLLGVFCYLGRQWEL), and 142 to 156 (WICVAYSAPVSAATA). H118 contributes to the chlorophyll a binding site. Y126 serves as a coordination point for pheophytin a. [CaMn4O5] cluster contacts are provided by D170 and E189. The chain crosses the membrane as a helical span at residues 197 to 218 (FHMLGVAGVFGGSLFSAMHGSL). H198 contacts chlorophyll a. Residues H215 and 264-265 (SF) each bind a quinone. Residue H215 coordinates Fe cation. H272 lines the Fe cation pocket. The helical transmembrane segment at 274 to 288 (FLGAWPVIGIWFTAM) threads the bilayer. [CaMn4O5] cluster is bound by residues H332, E333, D342, and A344. A propeptide spanning residues 345-360 (SGEQAPVALIAPAING) is cleaved from the precursor.

It belongs to the reaction center PufL/M/PsbA/D family. As to quaternary structure, PSII is composed of 1 copy each of membrane proteins PsbA, PsbB, PsbC, PsbD, PsbE, PsbF, PsbH, PsbI, PsbJ, PsbK, PsbL, PsbM, PsbT, PsbX, PsbY, PsbZ, Psb30/Ycf12, peripheral proteins PsbO, CyanoQ (PsbQ), PsbU, PsbV and a large number of cofactors. It forms dimeric complexes. The cofactor is The D1/D2 heterodimer binds P680, chlorophylls that are the primary electron donor of PSII, and subsequent electron acceptors. It shares a non-heme iron and each subunit binds pheophytin, quinone, additional chlorophylls, carotenoids and lipids. D1 provides most of the ligands for the Mn4-Ca-O5 cluster of the oxygen-evolving complex (OEC). There is also a Cl(-1) ion associated with D1 and D2, which is required for oxygen evolution. The PSII complex binds additional chlorophylls, carotenoids and specific lipids.. Post-translationally, tyr-161 forms a radical intermediate that is referred to as redox-active TyrZ, YZ or Y-Z. C-terminally processed by CtpA; processing is essential to allow assembly of the oxygen-evolving complex and thus photosynthetic growth.

Its subcellular location is the cellular thylakoid membrane. The enzyme catalyses 2 a plastoquinone + 4 hnu + 2 H2O = 2 a plastoquinol + O2. Functionally, photosystem II (PSII) is a light-driven water:plastoquinone oxidoreductase that uses light energy to abstract electrons from H(2)O, generating O(2) and a proton gradient subsequently used for ATP formation. It consists of a core antenna complex that captures photons, and an electron transfer chain that converts photonic excitation into a charge separation. The D1/D2 (PsbA/PsbD) reaction center heterodimer binds P680, the primary electron donor of PSII as well as several subsequent electron acceptors. In Microcystis aeruginosa (strain NIES-843 / IAM M-2473), this protein is Photosystem II protein D1.